Here is a 223-residue protein sequence, read N- to C-terminus: Ribose-5-phosphate isomerase A (223 aa).

Residues 28-31, 81-84, and 94-97 contribute to the substrate site; these read TGST, DGAD, and KGGG. The active-site Proton acceptor is Glu-103. Lys-121 lines the substrate pocket.

It belongs to the ribose 5-phosphate isomerase family. In terms of assembly, homodimer.

It carries out the reaction aldehydo-D-ribose 5-phosphate = D-ribulose 5-phosphate. Its pathway is carbohydrate degradation; pentose phosphate pathway; D-ribose 5-phosphate from D-ribulose 5-phosphate (non-oxidative stage): step 1/1. Catalyzes the reversible conversion of ribose-5-phosphate to ribulose 5-phosphate. This Herminiimonas arsenicoxydans protein is Ribose-5-phosphate isomerase A.